Reading from the N-terminus, the 183-residue chain is ADP-ribosylation factor 3 (183 aa).

Glycine 2 carries the N-myristoyl glycine lipid modification. Residues 24-31 (GLDKAGKT), 67-71 (DVGGQ), and 126-129 (NKQD) contribute to the GTP site.

It belongs to the small GTPase superfamily. Arf family. Interacts with RUD3.

It localises to the golgi apparatus. In terms of biological role, GTP-binding protein involved in protein trafficking; may modulate vesicle budding and uncoating within the Golgi apparatus. The protein is ADP-ribosylation factor 3 (ARF3) of Saccharomyces cerevisiae (strain ATCC 204508 / S288c) (Baker's yeast).